A 392-amino-acid chain; its full sequence is Bifunctional enzyme Fae/Hps (392 aa).

The interval 1 to 161 is formaldehyde-activating enzyme; that stretch reads MFLVGEALIG…YEKERSVHPV (161 aa). Histidine 17 acts as the Proton donor in catalysis. Residues aspartate 19, leucine 48, lysine 66, threonine 68, and glutamine 83 each coordinate substrate. The tract at residues 162–392 is 3-hexulose-6-phosphate synthase; the sequence is MGYRVMRLWD…IDQYRIMTDF (231 aa).

It in the N-terminal section; belongs to the formaldehyde-activating enzyme family. In the C-terminal section; belongs to the HPS/KGPDC family. HPS subfamily.

The enzyme catalyses 5,6,7,8-tetrahydromethanopterin + formaldehyde = 5,10-methylenetetrahydromethanopterin + H2O. It catalyses the reaction D-ribulose 5-phosphate + formaldehyde = D-arabino-hex-3-ulose 6-phosphate. The protein operates within carbohydrate biosynthesis; D-ribose 5-phosphate biosynthesis. Its function is as follows. Catalyzes the condensation of formaldehyde with tetrahydromethanopterin (H(4)MPT) to 5,10-methylenetetrahydromethanopterin. Catalyzes the reversible formation of ribulose-5-phosphate and formaldehyde from 3-hexulose-6-phosphate. This chain is Bifunctional enzyme Fae/Hps, found in Methanothrix thermoacetophila (strain DSM 6194 / JCM 14653 / NBRC 101360 / PT) (Methanosaeta thermophila).